Here is a 269-residue protein sequence, read N- to C-terminus: BAG family molecular chaperone regulator 4 (269 aa).

Residues 1-40 (MMHNSTEESEWEVRPGGMLVQRRDDAASSDHKPLQDPDSA) form a disordered region. Residues 21–35 (QRRDDAASSDHKPLQ) show a composition bias toward basic and acidic residues. The Ubiquitin-like domain occupies 46-122 (QTIRITVSHG…LVVVVEDTNK (77 aa)). One can recognise a BAG domain in the interval 138–219 (AIAAVNAVTG…NLQEAVDKLK (82 aa)). The tract at residues 241 to 269 (SFGNGVGSLNPPPPASPSANVTQDWEKFD) is disordered.

As to quaternary structure, binds to the ATPase domain of HSP70/HSC70 chaperones. Interacts with HSP70-1. As to expression, detected in stems, leaves, flowers and roots.

Co-chaperone that regulates diverse cellular pathways, such as programmed cell death and stress responses. This is BAG family molecular chaperone regulator 4 (BAG4) from Arabidopsis thaliana (Mouse-ear cress).